The primary structure comprises 361 residues: MFKRRYVTLLPLFVLLAACSSKPKPTETDTTTGTPSGGFLLEPQHNVMQMGGDFANNPNAQQFIDKMVNKHGFDRQQLQEILSQAKRLDSVLRLMDNQAPTTSVKPPSGPNGAWLRYRKKFITPDNVQNGVVFWNQYEDALNRAWQVYGVPPEIIVGIIGVETRWGRVMGKTRILDALATLSFNYPRRAEYFSGELETFLLMARDEQDDPLNLKGSFAGAMGYGQFMPSSYKQYAVDFSGDGHINLWDPVDAIGSVANYFKAHGWVKGDQVAVMANGQAPGLPNGFKTKYSISQLAAAGLTPQQPLGNHQQASLLRLDVGTGYQYWYGLPNFYTITRYNHSTHYAMAVWQLGQAVALARVQ.

Positions 1–18 (MFKRRYVTLLPLFVLLAA) are cleaved as a signal peptide. Residue Cys19 is the site of N-palmitoyl cysteine attachment. Residue Cys19 is the site of S-diacylglycerol cysteine attachment. The active site involves Glu162.

In terms of assembly, monomer.

Its subcellular location is the cell outer membrane. It carries out the reaction Exolytic cleavage of the (1-&gt;4)-beta-glycosidic linkage between N-acetylmuramic acid (MurNAc) and N-acetylglucosamine (GlcNAc) residues in peptidoglycan, from either the reducing or the non-reducing ends of the peptidoglycan chains, with concomitant formation of a 1,6-anhydrobond in the MurNAc residue.. Its function is as follows. Murein-degrading enzyme. Catalyzes the cleavage of the glycosidic bonds between N-acetylmuramic acid and N-acetylglucosamine residues in peptidoglycan. May play a role in recycling of muropeptides during cell elongation and/or cell division. The chain is Membrane-bound lytic murein transglycosylase B (mltB) from Escherichia coli (strain K12).